We begin with the raw amino-acid sequence, 507 residues long: Histone-lysine N-methyltransferase set-18 (507 aa).

Positions 49, 52, 65, 68, 74, 78, 86, and 90 each coordinate Zn(2+). The MYND-type zinc-finger motif lies at 49–90 (CANCLRGPAPGEKLLRCGGCNFSMYCSKECQATAWLVHKPEC).

This sequence belongs to the class V-like SAM-binding methyltransferase superfamily. Histone-lysine methyltransferase family. Expressed in pharyngeal and body wall muscles.

It catalyses the reaction L-lysyl(36)-[histone H3] + 2 S-adenosyl-L-methionine = N(6),N(6)-dimethyl-L-lysyl(36)-[histone H3] + 2 S-adenosyl-L-homocysteine + 2 H(+). In terms of biological role, histone methyltransferase. Specifically methylates 'Lys-36' of histone H3, inducing di-methylation. Plays a role in modulating lifespan and oxidative stress resistance, in a manner dependent upon daf-16/Forkhead box protein O and the Insulin/IGF-1-like signaling (IIS) mediated pathway. Represses transcription of daf-16 isoform a, perhaps by methylating histone H3 at the daf-16 promoter, which in turn leads to recruitment of histone deacetylases and thus modulation of expression. The polypeptide is Histone-lysine N-methyltransferase set-18 (Caenorhabditis elegans).